A 345-amino-acid chain; its full sequence is N-acetyl-gamma-glutamyl-phosphate reductase (345 aa).

Cysteine 149 is an active-site residue.

It belongs to the NAGSA dehydrogenase family. Type 1 subfamily.

The protein resides in the cytoplasm. The catalysed reaction is N-acetyl-L-glutamate 5-semialdehyde + phosphate + NADP(+) = N-acetyl-L-glutamyl 5-phosphate + NADPH + H(+). The protein operates within amino-acid biosynthesis; L-arginine biosynthesis; N(2)-acetyl-L-ornithine from L-glutamate: step 3/4. In terms of biological role, catalyzes the NADPH-dependent reduction of N-acetyl-5-glutamyl phosphate to yield N-acetyl-L-glutamate 5-semialdehyde. The chain is N-acetyl-gamma-glutamyl-phosphate reductase from Bacillus subtilis (strain 168).